Consider the following 256-residue polypeptide: Bialaphos biosynthetic pathway regulatory protein (256 aa).

An HTH luxR-type domain is found at 184–249 (ETADAIDVSD…QLGARAAECR (66 aa)). Positions 208–227 (DVAMARSLGISTRTLRRVIT) form a DNA-binding region, H-T-H motif.

Functionally, involved in the regulation of the biosynthesis of phosphinothricin tripeptide (PTT), also known as bialaphos (BA), a natural-product antibiotic and potent herbicide. This Streptomyces hygroscopicus protein is Bialaphos biosynthetic pathway regulatory protein (brpA).